The sequence spans 532 residues: Phosphoenolpyruvate carboxykinase (ATP) (532 aa).

Arg-58, Tyr-194, and Lys-200 together coordinate substrate. ATP contacts are provided by residues Lys-200, His-220, and 236–244; that span reads GLSGTGKTT. Mn(2+) contacts are provided by Lys-200 and His-220. Mn(2+) is bound at residue Asp-257. ATP contacts are provided by residues Glu-285, Arg-322, 442–443, and Thr-448; that span reads RV. Arg-322 is a substrate binding site.

This sequence belongs to the phosphoenolpyruvate carboxykinase (ATP) family. The cofactor is Mn(2+).

The protein localises to the cytoplasm. It carries out the reaction oxaloacetate + ATP = phosphoenolpyruvate + ADP + CO2. The protein operates within carbohydrate biosynthesis; gluconeogenesis. Its function is as follows. Involved in the gluconeogenesis. Catalyzes the conversion of oxaloacetate (OAA) to phosphoenolpyruvate (PEP) through direct phosphoryl transfer between the nucleoside triphosphate and OAA. The sequence is that of Phosphoenolpyruvate carboxykinase (ATP) from Rubrobacter xylanophilus (strain DSM 9941 / JCM 11954 / NBRC 16129 / PRD-1).